A 103-amino-acid polypeptide reads, in one-letter code: Large ribosomal subunit protein uL24 (103 aa).

It belongs to the universal ribosomal protein uL24 family. In terms of assembly, part of the 50S ribosomal subunit.

Functionally, one of two assembly initiator proteins, it binds directly to the 5'-end of the 23S rRNA, where it nucleates assembly of the 50S subunit. In terms of biological role, one of the proteins that surrounds the polypeptide exit tunnel on the outside of the subunit. The chain is Large ribosomal subunit protein uL24 from Actinobacillus pleuropneumoniae serotype 3 (strain JL03).